Reading from the N-terminus, the 190-residue chain is Nucleoside triphosphate pyrophosphatase (190 aa).

The active-site Proton acceptor is the Asp69.

This sequence belongs to the Maf family. A divalent metal cation serves as cofactor.

The protein localises to the cytoplasm. The enzyme catalyses a ribonucleoside 5'-triphosphate + H2O = a ribonucleoside 5'-phosphate + diphosphate + H(+). It catalyses the reaction a 2'-deoxyribonucleoside 5'-triphosphate + H2O = a 2'-deoxyribonucleoside 5'-phosphate + diphosphate + H(+). Functionally, nucleoside triphosphate pyrophosphatase. May have a dual role in cell division arrest and in preventing the incorporation of modified nucleotides into cellular nucleic acids. This chain is Nucleoside triphosphate pyrophosphatase, found in Helicobacter pylori (strain Shi470).